The following is a 232-amino-acid chain: Octanoyltransferase (232 aa).

Residues 44–219 (EYTADEIWVV…QLARQFGLVL (176 aa)) enclose the BPL/LPL catalytic domain. Substrate-binding positions include 83–90 (RGGQVTYH), 150–152 (ALG), and 163–165 (GLS). The active-site Acyl-thioester intermediate is the C181.

This sequence belongs to the LipB family.

It is found in the cytoplasm. It catalyses the reaction octanoyl-[ACP] + L-lysyl-[protein] = N(6)-octanoyl-L-lysyl-[protein] + holo-[ACP] + H(+). It participates in protein modification; protein lipoylation via endogenous pathway; protein N(6)-(lipoyl)lysine from octanoyl-[acyl-carrier-protein]: step 1/2. Functionally, catalyzes the transfer of endogenously produced octanoic acid from octanoyl-acyl-carrier-protein onto the lipoyl domains of lipoate-dependent enzymes. Lipoyl-ACP can also act as a substrate although octanoyl-ACP is likely to be the physiological substrate. The protein is Octanoyltransferase of Xanthomonas axonopodis pv. citri (strain 306).